The following is an 87-amino-acid chain: U14-lycotoxin-Ls1a (87 aa).

Residues 1-20 form the signal peptide; the sequence is MNSKVFAVLLLLALLTCVLS. Residues 21-66 form the WAP domain; it reads EKYCPTPRNTSCKKMNIRNNCCRDSDCTSNAFCCAEPCGNFCHKAS. 5 disulfide bridges follow: Cys24/Cys54, Cys32/Cys58, Cys41/Cys53, Cys42/Cys80, and Cys47/Cys62.

This sequence belongs to the venom protein 11 family. 01 (wap-1) subfamily. In terms of processing, contains 5 disulfide bonds. Expressed by the venom gland.

It is found in the secreted. In terms of biological role, has antibacterial activity. The polypeptide is U14-lycotoxin-Ls1a (Lycosa singoriensis (Wolf spider)).